The chain runs to 133 residues: Fluoride-specific ion channel FluC 3 (133 aa).

The next 3 helical transmembrane spans lie at 7 to 27 (ILVLVGGFIGGVMRFFLSGYV), 37 to 57 (WGTFVVNVSGAFVIGTAAGLG), and 60 to 80 (LGAIFSTTIFHEFIMVGLLGG). Na(+)-binding residues include G79 and T82. A helical transmembrane segment spans residues 107–127 (IVASALLCVLAVAAGYGGIMW).

This sequence belongs to the fluoride channel Fluc/FEX (TC 1.A.43) family.

The protein localises to the cell inner membrane. The enzyme catalyses fluoride(in) = fluoride(out). With respect to regulation, na(+) is not transported, but it plays an essential structural role and its presence is essential for fluoride channel function. Its function is as follows. Fluoride-specific ion channel. Important for reducing fluoride concentration in the cell, thus reducing its toxicity. This chain is Fluoride-specific ion channel FluC 3, found in Brucella suis biovar 1 (strain 1330).